A 180-amino-acid polypeptide reads, in one-letter code: ATP-dependent protease subunit HslV (180 aa).

Threonine 5 is an active-site residue. Residues glycine 165, cysteine 168, and threonine 171 each coordinate Na(+).

It belongs to the peptidase T1B family. HslV subfamily. In terms of assembly, a double ring-shaped homohexamer of HslV is capped on each side by a ring-shaped HslU homohexamer. The assembly of the HslU/HslV complex is dependent on binding of ATP.

It localises to the cytoplasm. It carries out the reaction ATP-dependent cleavage of peptide bonds with broad specificity.. Allosterically activated by HslU binding. Protease subunit of a proteasome-like degradation complex believed to be a general protein degrading machinery. The protein is ATP-dependent protease subunit HslV of Helicobacter hepaticus (strain ATCC 51449 / 3B1).